The following is a 359-amino-acid chain: MATTHLTAALALLCALLQVDIEASSWWSLAMNPVQIPEAYIVGAQPLCSQLPGLSPGQKKLCQLYQDHMPYIGEGAKTGIKECQYQFRHRRWNCSTVDNASVFGRVMQIGSRETAFTYSISAAGVVNAVSRACREGELSTCGCSRAARPKDLQRDWLWGGCGDNLEYGYRFAKEFVDAREREKIHTKGSYESSRTLMNIHNNEAGRRTVYNLADAACKCHGVSGSCSLKTCWLQLADFRKVGDFLKEKYDSAASMRLNARGKLVQVNSRFNPPTTNDLVYVDTSPDYCVRNESTGSLGTQGRLCNKTSEGMDGCELMCCGRGYDQFKTVQTERCHCKFHWCCYVKCKKCTEIVDQFVCK.

The N-terminal stretch at 1-20 (MATTHLTAALALLCALLQVD) is a signal peptide. A disulfide bridge connects residues Cys-83 and Cys-94. N-linked (GlcNAc...) asparagine glycans are attached at residues Asn-93 and Asn-99. Cystine bridges form between Cys-133–Cys-141, Cys-143–Cys-161, Cys-217–Cys-231, Cys-219–Cys-226, Cys-288–Cys-319, Cys-304–Cys-314, Cys-318–Cys-358, Cys-334–Cys-349, Cys-336–Cys-346, and Cys-341–Cys-342. The O-palmitoleoyl serine; by PORCN moiety is linked to residue Ser-223. N-linked (GlcNAc...) asparagine glycosylation is found at Asn-291 and Asn-305.

It belongs to the Wnt family. Palmitoleoylation is required for efficient binding to frizzled receptors. Depalmitoleoylation leads to Wnt signaling pathway inhibition. As to expression, neuroectodermal and non-neuroectodermal tissues.

The protein resides in the secreted. Its subcellular location is the extracellular space. The protein localises to the extracellular matrix. Functionally, ligand for members of the frizzled family of seven transmembrane receptors. Can activate or inhibit canonical Wnt signaling, depending on receptor context. Required during embryogenesis for extension of the primary anterior-posterior axis. The protein is Protein Wnt-5a (WNT-5A) of Ambystoma mexicanum (Axolotl).